The primary structure comprises 171 residues: 6,7-dimethyl-8-ribityllumazine synthase (171 aa).

Residues Phe-24, 58-60 (ALE), and 82-84 (AVI) contribute to the 5-amino-6-(D-ribitylamino)uracil site. Position 87–88 (87–88 (ET)) interacts with (2S)-2-hydroxy-3-oxobutyl phosphate. Catalysis depends on His-90, which acts as the Proton donor. 5-amino-6-(D-ribitylamino)uracil is bound at residue Asn-115. Residue Arg-129 participates in (2S)-2-hydroxy-3-oxobutyl phosphate binding. The tract at residues 150-171 (ALDQLGDDEDEEEDEEDEEERA) is disordered. The span at 154–171 (LGDDEDEEEDEEDEEERA) shows a compositional bias: acidic residues.

Belongs to the DMRL synthase family.

It catalyses the reaction (2S)-2-hydroxy-3-oxobutyl phosphate + 5-amino-6-(D-ribitylamino)uracil = 6,7-dimethyl-8-(1-D-ribityl)lumazine + phosphate + 2 H2O + H(+). The protein operates within cofactor biosynthesis; riboflavin biosynthesis; riboflavin from 2-hydroxy-3-oxobutyl phosphate and 5-amino-6-(D-ribitylamino)uracil: step 1/2. Functionally, catalyzes the formation of 6,7-dimethyl-8-ribityllumazine by condensation of 5-amino-6-(D-ribitylamino)uracil with 3,4-dihydroxy-2-butanone 4-phosphate. This is the penultimate step in the biosynthesis of riboflavin. This chain is 6,7-dimethyl-8-ribityllumazine synthase, found in Burkholderia ambifaria (strain ATCC BAA-244 / DSM 16087 / CCUG 44356 / LMG 19182 / AMMD) (Burkholderia cepacia (strain AMMD)).